The sequence spans 260 residues: Indole-3-glycerol phosphate synthase (260 aa).

It belongs to the TrpC family.

The catalysed reaction is 1-(2-carboxyphenylamino)-1-deoxy-D-ribulose 5-phosphate + H(+) = (1S,2R)-1-C-(indol-3-yl)glycerol 3-phosphate + CO2 + H2O. It participates in amino-acid biosynthesis; L-tryptophan biosynthesis; L-tryptophan from chorismate: step 4/5. The sequence is that of Indole-3-glycerol phosphate synthase from Neisseria meningitidis serogroup B (strain ATCC BAA-335 / MC58).